Consider the following 181-residue polypeptide: ATP synthase subunit delta (181 aa).

Belongs to the ATPase delta chain family. F-type ATPases have 2 components, F(1) - the catalytic core - and F(0) - the membrane proton channel. F(1) has five subunits: alpha(3), beta(3), gamma(1), delta(1), epsilon(1). F(0) has three main subunits: a(1), b(2) and c(10-14). The alpha and beta chains form an alternating ring which encloses part of the gamma chain. F(1) is attached to F(0) by a central stalk formed by the gamma and epsilon chains, while a peripheral stalk is formed by the delta and b chains.

It localises to the cell membrane. F(1)F(0) ATP synthase produces ATP from ADP in the presence of a proton or sodium gradient. F-type ATPases consist of two structural domains, F(1) containing the extramembraneous catalytic core and F(0) containing the membrane proton channel, linked together by a central stalk and a peripheral stalk. During catalysis, ATP synthesis in the catalytic domain of F(1) is coupled via a rotary mechanism of the central stalk subunits to proton translocation. In terms of biological role, this protein is part of the stalk that links CF(0) to CF(1). It either transmits conformational changes from CF(0) to CF(1) or is implicated in proton conduction. The protein is ATP synthase subunit delta of Mycoplasma mycoides subsp. mycoides SC (strain CCUG 32753 / NCTC 10114 / PG1).